The sequence spans 367 residues: Protein RecA (367 aa).

An ATP-binding site is contributed by 73–80 (GPESSGKT). The disordered stretch occupies residues 345–367 (DEPVAKKASAKESKEAKELKEVE).

Belongs to the RecA family.

It localises to the cytoplasm. In terms of biological role, can catalyze the hydrolysis of ATP in the presence of single-stranded DNA, the ATP-dependent uptake of single-stranded DNA by duplex DNA, and the ATP-dependent hybridization of homologous single-stranded DNAs. It interacts with LexA causing its activation and leading to its autocatalytic cleavage. This is Protein RecA from Janthinobacterium sp. (strain Marseille) (Minibacterium massiliensis).